The primary structure comprises 417 residues: Serine hydroxymethyltransferase (417 aa).

Residues L120 and 124 to 126 contribute to the (6S)-5,6,7,8-tetrahydrofolate site; that span reads GHL. Residue K229 is modified to N6-(pyridoxal phosphate)lysine. 354 to 356 lines the (6S)-5,6,7,8-tetrahydrofolate pocket; the sequence is SPF.

Belongs to the SHMT family. Homodimer. Requires pyridoxal 5'-phosphate as cofactor.

Its subcellular location is the cytoplasm. It catalyses the reaction (6R)-5,10-methylene-5,6,7,8-tetrahydrofolate + glycine + H2O = (6S)-5,6,7,8-tetrahydrofolate + L-serine. It participates in one-carbon metabolism; tetrahydrofolate interconversion. It functions in the pathway amino-acid biosynthesis; glycine biosynthesis; glycine from L-serine: step 1/1. In terms of biological role, catalyzes the reversible interconversion of serine and glycine with tetrahydrofolate (THF) serving as the one-carbon carrier. This reaction serves as the major source of one-carbon groups required for the biosynthesis of purines, thymidylate, methionine, and other important biomolecules. Also exhibits THF-independent aldolase activity toward beta-hydroxyamino acids, producing glycine and aldehydes, via a retro-aldol mechanism. The polypeptide is Serine hydroxymethyltransferase (Acinetobacter radioresistens).